The sequence spans 229 residues: Aminopyrimidine aminohydrolase (229 aa).

D44 contributes to the substrate binding site. The active-site Nucleophile is the C137. 2 residues coordinate substrate: Y141 and Y167. E208 (proton donor) is an active-site residue.

Belongs to the TenA family. As to quaternary structure, homotetramer.

It carries out the reaction 4-amino-5-aminomethyl-2-methylpyrimidine + H2O = 4-amino-5-hydroxymethyl-2-methylpyrimidine + NH4(+). It catalyses the reaction thiamine + H2O = 5-(2-hydroxyethyl)-4-methylthiazole + 4-amino-5-hydroxymethyl-2-methylpyrimidine + H(+). It functions in the pathway cofactor biosynthesis; thiamine diphosphate biosynthesis. Catalyzes an amino-pyrimidine hydrolysis reaction at the C5' of the pyrimidine moiety of thiamine compounds, a reaction that is part of a thiamine salvage pathway. Thus, catalyzes the conversion of 4-amino-5-aminomethyl-2-methylpyrimidine to 4-amino-5-hydroxymethyl-2-methylpyrimidine (HMP). Is also able to catalyze the hydrolytic cleavage of thiamine; however, this thiaminase activity may not be physiologically relevant. Therefore, is probably involved in the regeneration of the thiamine pyrimidine from thiamine degraded products present in the environment, rather than in thiamine degradation. The sequence is that of Aminopyrimidine aminohydrolase from Staphylococcus aureus (strain MRSA252).